We begin with the raw amino-acid sequence, 378 residues long: Transcription elongation factor TFIIS (378 aa).

At methionine 1 the chain carries N-acetylmethionine. Positions 10–89 (EGAKKAADAA…EIWKKVVIEE (80 aa)) constitute a TFIIS N-terminal domain. Residues 210 to 333 (VRDKIRELLV…DCERGLAAKA (124 aa)) enclose the TFIIS central domain. The TFIIS-type zinc-finger motif lies at 336–376 (DQFKCGRCGQRKCTYYQMQTRSADEPMTTYVTCVNCDNHWK). 4 residues coordinate Zn(2+): cysteine 340, cysteine 343, cysteine 368, and cysteine 371.

In terms of tissue distribution, expressed in roots, leaves and flowers.

The protein localises to the nucleus. In terms of biological role, necessary for efficient RNA polymerase II transcription elongation past template-encoded arresting sites. Involved in the control of seed dormancy and germination. This is Transcription elongation factor TFIIS from Arabidopsis thaliana (Mouse-ear cress).